The chain runs to 122 residues: Large ribosomal subunit protein uL14 (122 aa).

This sequence belongs to the universal ribosomal protein uL14 family. As to quaternary structure, part of the 50S ribosomal subunit. Forms a cluster with proteins L3 and L19. In the 70S ribosome, L14 and L19 interact and together make contacts with the 16S rRNA in bridges B5 and B8.

Binds to 23S rRNA. Forms part of two intersubunit bridges in the 70S ribosome. The polypeptide is Large ribosomal subunit protein uL14 (Chlorobium luteolum (strain DSM 273 / BCRC 81028 / 2530) (Pelodictyon luteolum)).